Here is a 133-residue protein sequence, read N- to C-terminus: Nickel-responsive regulator (133 aa).

The Ni(2+) site is built by His-76, His-87, His-89, and Cys-95.

The protein belongs to the transcriptional regulatory CopG/NikR family. Homotetramer. The cofactor is Ni(2+).

Transcriptional repressor of the nikABCDE operon. Is active in the presence of excessive concentrations of intracellular nickel. This chain is Nickel-responsive regulator, found in Salmonella arizonae (strain ATCC BAA-731 / CDC346-86 / RSK2980).